We begin with the raw amino-acid sequence, 369 residues long: 4-hydroxy-3-methylbut-2-en-1-yl diphosphate synthase (flavodoxin) (369 aa).

[4Fe-4S] cluster contacts are provided by C270, C273, C305, and E312.

This sequence belongs to the IspG family. The cofactor is [4Fe-4S] cluster.

The enzyme catalyses (2E)-4-hydroxy-3-methylbut-2-enyl diphosphate + oxidized [flavodoxin] + H2O + 2 H(+) = 2-C-methyl-D-erythritol 2,4-cyclic diphosphate + reduced [flavodoxin]. It functions in the pathway isoprenoid biosynthesis; isopentenyl diphosphate biosynthesis via DXP pathway; isopentenyl diphosphate from 1-deoxy-D-xylulose 5-phosphate: step 5/6. Functionally, converts 2C-methyl-D-erythritol 2,4-cyclodiphosphate (ME-2,4cPP) into 1-hydroxy-2-methyl-2-(E)-butenyl 4-diphosphate. In Pseudomonas putida (strain ATCC 47054 / DSM 6125 / CFBP 8728 / NCIMB 11950 / KT2440), this protein is 4-hydroxy-3-methylbut-2-en-1-yl diphosphate synthase (flavodoxin).